We begin with the raw amino-acid sequence, 188 residues long: dCTP deaminase (188 aa).

DCTP is bound by residues 111–116 (KSTYAR), 135–137 (TLE), Gln-156, Tyr-170, and Gln-180. Glu-137 serves as the catalytic Proton donor/acceptor.

It belongs to the dCTP deaminase family. Homotrimer.

The enzyme catalyses dCTP + H2O + H(+) = dUTP + NH4(+). It functions in the pathway pyrimidine metabolism; dUMP biosynthesis; dUMP from dCTP (dUTP route): step 1/2. Catalyzes the deamination of dCTP to dUTP. The polypeptide is dCTP deaminase (Legionella pneumophila (strain Paris)).